Consider the following 109-residue polypeptide: Spermidine export protein MdtI (109 aa).

4 consecutive transmembrane segments (helical) span residues 6-26, 36-56, 64-84, and 88-108; these read WVHG…NVLL, CYGI…SQAV, AYAL…WVLF, and LNPK…MIKL.

Belongs to the drug/metabolite transporter (DMT) superfamily. Small multidrug resistance (SMR) (TC 2.A.7.1) family. MdtI subfamily. In terms of assembly, forms a complex with MdtJ.

Its subcellular location is the cell inner membrane. Catalyzes the excretion of spermidine. The polypeptide is Spermidine export protein MdtI (Salmonella arizonae (strain ATCC BAA-731 / CDC346-86 / RSK2980)).